The primary structure comprises 207 residues: HTH-type transcriptional regulator BetI 2 (207 aa).

Positions 8 to 68 constitute an HTH tetR-type domain; that stretch reads PIRRQQLIKA…ATMRQILTDL (61 aa). Positions 31-50 form a DNA-binding region, H-T-H motif; the sequence is TVMRIARHAGVSAGIISHYF.

It functions in the pathway amine and polyamine biosynthesis; betaine biosynthesis via choline pathway [regulation]. Its function is as follows. Repressor involved in the biosynthesis of the osmoprotectant glycine betaine. It represses transcription of the choline transporter BetT and the genes of BetAB involved in the synthesis of glycine betaine. The polypeptide is HTH-type transcriptional regulator BetI 2 (Chromohalobacter salexigens (strain ATCC BAA-138 / DSM 3043 / CIP 106854 / NCIMB 13768 / 1H11)).